The sequence spans 655 residues: Fructose-1,6-bisphosphatase class 3 (655 aa).

Belongs to the FBPase class 3 family. Mn(2+) is required as a cofactor.

It catalyses the reaction beta-D-fructose 1,6-bisphosphate + H2O = beta-D-fructose 6-phosphate + phosphate. It functions in the pathway carbohydrate biosynthesis; gluconeogenesis. The protein is Fructose-1,6-bisphosphatase class 3 of Porphyromonas gingivalis (strain ATCC BAA-308 / W83).